The primary structure comprises 1259 residues: Protein retinal degeneration B (1259 aa).

The disordered stretch occupies residues 268–378; it reads GGGEECSDDS…SKGALHSPVG (111 aa). 2 positions are modified to phosphoserine: Ser274 and Ser277. A compositionally biased stretch (low complexity) spans 284 to 293; that stretch reads STAATAASTT. Residues 318 to 335 show a composition bias toward acidic residues; sequence SSDEEGEEEEDDDEDEND. Residues 347 to 363 show a composition bias toward low complexity; the sequence is QGGSAQRSRSQSIQMAQ. A phosphoserine mark is found at Ser401, Ser403, and Ser434. 3 disordered regions span residues 427-454, 472-500, and 660-692; these read LLGE…GNSR, RGNK…STPS, and SQPG…NSRL. Over residues 663–678 the composition is skewed to low complexity; it reads GTASGASNSGGDAATN. The segment covering 679-689 has biased composition (polar residues); the sequence is INTHNPLSPRN. Residues 730 to 913 form the DDHD domain; it reads LDFEVCDFFM…IAFILRQIGK (184 aa).

This sequence belongs to the PtdIns transfer protein family. PI transfer class IIA subfamily. Expressed in adult heads, not detected in bodies.

The enzyme catalyses a 1,2-diacyl-sn-glycero-3-phospho-(1D-myo-inositol)(in) = a 1,2-diacyl-sn-glycero-3-phospho-(1D-myo-inositol)(out). It carries out the reaction a 1,2-diacyl-sn-glycero-3-phosphate(in) = a 1,2-diacyl-sn-glycero-3-phosphate(out). Catalyzes the transfer of phosphatidylinositol (PI) and phosphatidic acid (PA) between membranes. May control phosphatidylinositol concentration in transport vesicles from the subrhabdomeric cisternae (SRC) to the rhabdomere. May function as a calcium transporter. This Drosophila melanogaster (Fruit fly) protein is Protein retinal degeneration B (rdgB).